Consider the following 318-residue polypeptide: uncharacterized protein (318 aa).

Residues 2 to 22 traverse the membrane as a helical segment; sequence ILELIIVLVLLVLAFKSLKIL. A disordered region spans residues 295–318; sequence SDPEDKGVSEVETESQPAEKPEKH.

The protein belongs to the band 7/mec-2 family.

The protein localises to the membrane. This is an uncharacterized protein from Methanothermobacter thermautotrophicus (strain ATCC 29096 / DSM 1053 / JCM 10044 / NBRC 100330 / Delta H) (Methanobacterium thermoautotrophicum).